Reading from the N-terminus, the 590-residue chain is Sulfoacetaldehyde acetyltransferase (590 aa).

Belongs to the TPP enzyme family. Requires Mg(2+) as cofactor. Thiamine diphosphate is required as a cofactor.

It localises to the cytoplasm. The enzyme catalyses acetyl phosphate + sulfite + H(+) = sulfoacetaldehyde + phosphate. It functions in the pathway organosulfur degradation; taurine degradation via aerobic pathway; acetyl phosphate and sulfite from taurine: step 2/2. In Rhodobacter capsulatus (strain ATCC BAA-309 / NBRC 16581 / SB1003), this protein is Sulfoacetaldehyde acetyltransferase.